The primary structure comprises 1775 residues: Atrochrysone carboxylic acid synthase (1775 aa).

Residues 29-258 form an N-terminal acylcarrier protein transacylase domain (SAT) region; that stretch reads RSQSKTESGW…QLPVYGGLCH (230 aa). One can recognise a Ketosynthase family 3 (KS3) domain in the interval 391–821; the sequence is DSSIAIVGMA…GGNTSLLIEE (431 aa). Catalysis depends on for beta-ketoacyl synthase activity residues C564, H699, and H740. The tract at residues 921-1241 is malonyl-CoA:ACP transacylase (MAT) domain; that stretch reads FVFSGQGSFY…MAQLHNLGVD (321 aa). Positions 1305-1626 are product template (PT) domain; it reads TSLVHRLVCE…RSLINTFFSP (322 aa). The interval 1309-1455 is N-terminal hotdog fold; it reads HRLVCESVQE…WLEEWSPMTH (147 aa). The PKS/mFAS DH domain maps to 1309 to 1621; it reads HRLVCESVQE…FRTFPRSLIN (313 aa). Residue H1341 is the Proton acceptor; for dehydratase activity of the active site. The tract at residues 1472–1621 is C-terminal hotdog fold; the sequence is TANRLSRDMV…FRTFPRSLIN (150 aa). The active-site Proton donor; for dehydratase activity is the D1532. A disordered region spans residues 1672 to 1694; the sequence is SRTVMDSSDSSPATTLTPPTLPS. A compositionally biased stretch (low complexity) spans 1677-1689; that stretch reads DSSDSSPATTLTP. The Carrier domain occupies 1698–1775; sequence STESPIVHRA…DLKAWLIDYC (78 aa). O-(pantetheine 4'-phosphoryl)serine is present on S1735.

Endocrocin is specifically produced in conidia.

It carries out the reaction holo-[ACP] + 8 malonyl-CoA + 8 H(+) = atrochrysone carboxyl-[ACP] + 8 CO2 + 8 CoA + 2 H2O. Its pathway is secondary metabolite biosynthesis. Its function is as follows. Non-reducing polyketide synthase; part of the gene cluster that mediates the biosynthesis of endocrocin, a simple anthraquinone interesting for many biotechnological applications. The pathway begins with the synthesis of atrochrysone thioester by the polyketide synthase (PKS) encA. The atrochrysone carboxyl ACP thioesterase encB then breaks the thioester bond and releases the atrochrysone carboxylic acid from encA. The atrochrysone carboxylic acid is then converted to endocrocin anthrone which is further oxidized into endocrocin by the anthrone oxygenase encC. The exact function of encD has not been identified yet, but it negatively regulates endocrocin production, likely through the modification of endocrocin itself. The chain is Atrochrysone carboxylic acid synthase from Aspergillus fumigatus (strain ATCC MYA-4609 / CBS 101355 / FGSC A1100 / Af293) (Neosartorya fumigata).